We begin with the raw amino-acid sequence, 236 residues long: Biosynthetic peptidoglycan transglycosylase (236 aa).

A helical membrane pass occupies residues 20 to 40 (GLVVAAVLALIPTMLTFLYLP).

It belongs to the glycosyltransferase 51 family.

Its subcellular location is the cell inner membrane. It catalyses the reaction [GlcNAc-(1-&gt;4)-Mur2Ac(oyl-L-Ala-gamma-D-Glu-L-Lys-D-Ala-D-Ala)](n)-di-trans,octa-cis-undecaprenyl diphosphate + beta-D-GlcNAc-(1-&gt;4)-Mur2Ac(oyl-L-Ala-gamma-D-Glu-L-Lys-D-Ala-D-Ala)-di-trans,octa-cis-undecaprenyl diphosphate = [GlcNAc-(1-&gt;4)-Mur2Ac(oyl-L-Ala-gamma-D-Glu-L-Lys-D-Ala-D-Ala)](n+1)-di-trans,octa-cis-undecaprenyl diphosphate + di-trans,octa-cis-undecaprenyl diphosphate + H(+). The protein operates within cell wall biogenesis; peptidoglycan biosynthesis. Its function is as follows. Peptidoglycan polymerase that catalyzes glycan chain elongation from lipid-linked precursors. In Mesorhizobium japonicum (strain LMG 29417 / CECT 9101 / MAFF 303099) (Mesorhizobium loti (strain MAFF 303099)), this protein is Biosynthetic peptidoglycan transglycosylase.